The primary structure comprises 430 residues: Histidine--tRNA ligase (430 aa).

The protein belongs to the class-II aminoacyl-tRNA synthetase family. In terms of assembly, homodimer.

The protein resides in the cytoplasm. The catalysed reaction is tRNA(His) + L-histidine + ATP = L-histidyl-tRNA(His) + AMP + diphosphate + H(+). This chain is Histidine--tRNA ligase (hisS), found in Clostridium acetobutylicum (strain ATCC 824 / DSM 792 / JCM 1419 / IAM 19013 / LMG 5710 / NBRC 13948 / NRRL B-527 / VKM B-1787 / 2291 / W).